Consider the following 248-residue polypeptide: Probable transcriptional regulatory protein RHE_CH03475 (248 aa).

It belongs to the TACO1 family.

The protein resides in the cytoplasm. This chain is Probable transcriptional regulatory protein RHE_CH03475, found in Rhizobium etli (strain ATCC 51251 / DSM 11541 / JCM 21823 / NBRC 15573 / CFN 42).